A 707-amino-acid chain; its full sequence is Tubulin polyglutamylase ttll-11 (707 aa).

The TTL domain maps to 124–488 (RFTIDTSRAK…PLVRDTLLLV (365 aa)). ATP contacts are provided by residues 279–282 (QEYV), K293, and D295. The interval 675–707 (RNRSGTNGRKQNFTDDNNNPNSFAHLPKINERL) is disordered. A compositionally biased stretch (polar residues) spans 677–696 (RSGTNGRKQNFTDDNNNPNS).

This sequence belongs to the tubulin--tyrosine ligase family. As to expression, expressed in amphid sensory neurons. Weakly expressed in body wall muscles. Isoform a: Specifically expressed in ciliated sensory neurons in the head, including the IL1s, OLQ, head CEP, and amphid neurons. In the male tail, expressed in HOA, RnA, and phasmid neurons. Isoform b: Specifically expressed in male and hermaphrodite IL2 ciliated sensory neurons, and in male-specific CEM, HOB and RnB ciliated sensory neurons.

The protein localises to the cell projection. Its subcellular location is the axon. The protein resides in the perikaryon. It localises to the dendrite. It is found in the cilium. The protein localises to the extracellular vesicle. It catalyses the reaction L-glutamyl-[protein] + L-glutamate + ATP = gamma-L-glutamyl-L-glutamyl-[protein] + ADP + phosphate + H(+). In terms of biological role, polyglutamylase which preferentially modifies tubulin. Involved in the side-chain initiation step of the polyglutamylation reaction. By controlling tubulin glutamylation, regulates ciliary specialization and motor-based transport. Promotes the formation of A and B tubule singlets by splaying microtubule doublets in cilia. Together with ttll-4 and 5, required for male mating. Specifically promotes tubulin glutamylation in a subset of ciliated neurons including amphid, phasmid, CEP and RnA neurons. Functionally, specifically promotes tubulin glutamylation in male ciliated CEM, HOB and RnB neurons that release bioactive extracellular vesicles. Regulates the localization of TRP channel pdk-2 in male CEM, HOB and RnB neurons. Regulates the environmental release of bioactive extracellular vesicles in cilia. The sequence is that of Tubulin polyglutamylase ttll-11 from Caenorhabditis elegans.